We begin with the raw amino-acid sequence, 93 residues long: Beta-defensin 128 (93 aa).

Residues M1–G18 form the signal peptide. Disulfide bonds link C24–C52, C32–C46, and C36–C53.

Belongs to the beta-defensin family.

The protein localises to the secreted. Its function is as follows. Has antibacterial activity. This is Beta-defensin 128 (DEFB128) from Pongo pygmaeus (Bornean orangutan).